Here is a 662-residue protein sequence, read N- to C-terminus: MQLDDDLEFAKKIFNPNRAFAKQARIKNMCEYKDLVHEANEDYEHFWGELAKQKLTWFKPFDKVLNSDNAPFFKWFENGKINVSYNCIDRHLKDKKNKVAIIFEGEMGDYNVITYRKLHSEVNKTANLLKNEFNVKKGDRVIIYMPMIVESVYMMLACARIGAIHSIVFAGFSPEALRDRINDAQAKLVITADGTFRKGKPYMLKPALDKALENNACPSVEKALIVIRNAKEIDYVRGRDFVYNEMVNYQSDKCEPEMMDSEDPLFLLYTSGSTGKPKGVQHSNAGYLLWAQMTMEWVFDIRDNDNFWCTADIGWITGHTYVVYGPLACGATTLILEGTMSYPDYGRWWRMIEEYRVDKFYTSPTAIRMLHAKGENEPLKYNLESLKVLGTVGEPINPTAWKWFYEKIGNSKCSIVDTWWQTETGGHIISPLPGATPIRASCATLPLPGIHAEVLNEDGTKTKPGEQGFLCITKPWPSMVRNIWGDEKRYIDSYFSQIKLNGEYVYLSGDGAIVDENGYITIIGRTDDIVNVSGHRIGTAEVESAISKHEMVVECAVVGIPDTIKGEGLFAFVVLCDGAKCNLGESLELLKEMNHILSVEIGKIAKLDNVMYVPGLPKTRSGKIMRRLLKSIAKKEPITQDLSTLEDVNVVKEIMSIVQMEE.

Residues 197–200 (RKGK) and Thr317 contribute to the CoA site. Residues 393-395 (GEP), 417-422 (DTWWQT), Asp510, and Arg525 contribute to the ATP site. A CoA-binding site is contributed by Ser533. Arg536 is a binding site for ATP. 2 residues coordinate Mg(2+): His549 and Val552. Residue Lys623 is modified to N6-acetyllysine.

Belongs to the ATP-dependent AMP-binding enzyme family. It depends on Mg(2+) as a cofactor. Acetylated. Deacetylation by the SIR2-homolog deacetylase activates the enzyme.

It carries out the reaction acetate + ATP + CoA = acetyl-CoA + AMP + diphosphate. Functionally, catalyzes the conversion of acetate into acetyl-CoA (AcCoA), an essential intermediate at the junction of anabolic and catabolic pathways. AcsA undergoes a two-step reaction. In the first half reaction, AcsA combines acetate with ATP to form acetyl-adenylate (AcAMP) intermediate. In the second half reaction, it can then transfer the acetyl group from AcAMP to the sulfhydryl group of CoA, forming the product AcCoA. The chain is Acetyl-coenzyme A synthetase from Helicobacter pylori (strain HPAG1).